Consider the following 377-residue polypeptide: MNNDVVELAKDLISRPSVTPLDEGCQTLMANRLAAVGFNIEPMVFEDTTNMWARRGNCDPVFCFAGHTDVVPTGDLNRWHTPPFEPTIIDNYLHGRGAADMKGSLAAMIIATERFVAKHPDHNGSIAYLITSDEEGPFINGTTRVIDTLEARNEKMTWALVGEPSSTHKLGDVVKNGRRGSLTGNLTVNGIQGHVAYPHLADNPIHKAVPALTELAQMHWDNGNEFFPPTSFQIANINGGTGASNVIPGELTVMFNFRYSTEVTAEELILRVVSILDAHGLDYDINWIFNGLPFLTGDGPLLDATREAIREVTGYETDPQTSGGTSDGRFIAPTGAQVLELGPVNATIHKVNECVNVADLEILANCYERILEKLLCK.

Zn(2+) is bound at residue His-67. Asp-69 is a catalytic residue. Residue Asp-100 coordinates Zn(2+). Glu-134 functions as the Proton acceptor in the catalytic mechanism. 3 residues coordinate Zn(2+): Glu-135, Glu-163, and His-349.

The protein belongs to the peptidase M20A family. DapE subfamily. Homodimer. It depends on Zn(2+) as a cofactor. Requires Co(2+) as cofactor.

It carries out the reaction N-succinyl-(2S,6S)-2,6-diaminopimelate + H2O = (2S,6S)-2,6-diaminopimelate + succinate. The protein operates within amino-acid biosynthesis; L-lysine biosynthesis via DAP pathway; LL-2,6-diaminopimelate from (S)-tetrahydrodipicolinate (succinylase route): step 3/3. In terms of biological role, catalyzes the hydrolysis of N-succinyl-L,L-diaminopimelic acid (SDAP), forming succinate and LL-2,6-diaminopimelate (DAP), an intermediate involved in the bacterial biosynthesis of lysine and meso-diaminopimelic acid, an essential component of bacterial cell walls. In Shewanella frigidimarina (strain NCIMB 400), this protein is Succinyl-diaminopimelate desuccinylase.